The chain runs to 152 residues: MTKERTFIAIKPDGVQRGYVSEILGRFEKKGFKLVGLKQLIPSKELAQNHYGVHRERPFFGDLVDFISSGPVVAMVWEGEGVILSARKLIGATKPLEAEPGTIRGDLAIDIGRNIIHGSDGEDTAKFEINLWFNEEELCEWETSDSKWRSEN.

ATP-binding residues include Lys11, Phe59, Arg87, Thr93, Arg104, and Asn114. His117 (pros-phosphohistidine intermediate) is an active-site residue.

It belongs to the NDK family. Homotetramer. It depends on Mg(2+) as a cofactor.

It localises to the cytoplasm. It carries out the reaction a 2'-deoxyribonucleoside 5'-diphosphate + ATP = a 2'-deoxyribonucleoside 5'-triphosphate + ADP. The catalysed reaction is a ribonucleoside 5'-diphosphate + ATP = a ribonucleoside 5'-triphosphate + ADP. Functionally, major role in the synthesis of nucleoside triphosphates other than ATP. The ATP gamma phosphate is transferred to the NDP beta phosphate via a ping-pong mechanism, using a phosphorylated active-site intermediate. In Prochlorococcus marinus (strain AS9601), this protein is Nucleoside diphosphate kinase.